Here is a 200-residue protein sequence, read N- to C-terminus: MIIKQAEFIISAAWKKQFPIDGKDEIAFVGRSNVGKSSLINAITNRRKLVKVSGTPGKTRLVNFFMINNDFYFVDLPGYGYAKVSKKELEKWSQTIEGYLVGREQLKKVILLVDSRHKPTKDDITMYNWIKYYDYKCIVIATKSDKIKRSEKVKNEKLIKETLKFNDSDEFYFFSSATKQGRDELINNICSGINYSENSL.

Residues G22 to Y195 enclose the EngB-type G domain. GTP contacts are provided by residues G30–S37, G57–L61, D75–G78, T142–D145, and F174–S176. Mg(2+) is bound by residues S37 and T59.

The protein belongs to the TRAFAC class TrmE-Era-EngA-EngB-Septin-like GTPase superfamily. EngB GTPase family. Mg(2+) is required as a cofactor.

Necessary for normal cell division and for the maintenance of normal septation. This is Probable GTP-binding protein EngB from Clostridium acetobutylicum (strain ATCC 824 / DSM 792 / JCM 1419 / IAM 19013 / LMG 5710 / NBRC 13948 / NRRL B-527 / VKM B-1787 / 2291 / W).